The primary structure comprises 615 residues: DNA mismatch repair protein MutL (615 aa).

It belongs to the DNA mismatch repair MutL/HexB family.

Functionally, this protein is involved in the repair of mismatches in DNA. It is required for dam-dependent methyl-directed DNA mismatch repair. May act as a 'molecular matchmaker', a protein that promotes the formation of a stable complex between two or more DNA-binding proteins in an ATP-dependent manner without itself being part of a final effector complex. This is DNA mismatch repair protein MutL from Histophilus somni (strain 2336) (Haemophilus somnus).